A 268-amino-acid chain; its full sequence is uncharacterized protein (268 aa).

The next 4 membrane-spanning stretches (helical) occupy residues Ser32–Ile52, Val70–Phe90, Gly125–Phe145, and Ile237–Thr257.

Belongs to the CbiQ family.

Its subcellular location is the cell membrane. This is an uncharacterized protein from Methanocaldococcus jannaschii (strain ATCC 43067 / DSM 2661 / JAL-1 / JCM 10045 / NBRC 100440) (Methanococcus jannaschii).